The following is a 100-amino-acid chain: Large ribosomal subunit protein uL23c (100 aa).

It belongs to the universal ribosomal protein uL23 family. Part of the 50S ribosomal subunit.

It is found in the plastid. The protein localises to the chloroplast. Binds to 23S rRNA. In Euglena gracilis, this protein is Large ribosomal subunit protein uL23c (rpl23).